Reading from the N-terminus, the 198-residue chain is Peptide deformylase (198 aa).

Fe cation contacts are provided by C123 and H170. E171 is a catalytic residue. H174 contributes to the Fe cation binding site.

This sequence belongs to the polypeptide deformylase family. It depends on Fe(2+) as a cofactor.

The enzyme catalyses N-terminal N-formyl-L-methionyl-[peptide] + H2O = N-terminal L-methionyl-[peptide] + formate. Removes the formyl group from the N-terminal Met of newly synthesized proteins. Requires at least a dipeptide for an efficient rate of reaction. N-terminal L-methionine is a prerequisite for activity but the enzyme has broad specificity at other positions. This Mycoplasmopsis pulmonis (strain UAB CTIP) (Mycoplasma pulmonis) protein is Peptide deformylase.